Reading from the N-terminus, the 401-residue chain is Tyrosine--tRNA ligase (401 aa).

The 'HIGH' region motif lies at 42–51 (PTAPDIHLGH). The 'KMSKS' region motif lies at 226–230 (KMSKS). Residue Lys-229 coordinates ATP. The S4 RNA-binding domain maps to 334 to 394 (MGLATLLKEA…GKRKFARVRL (61 aa)).

The protein belongs to the class-I aminoacyl-tRNA synthetase family. TyrS type 2 subfamily. Homodimer.

It is found in the cytoplasm. The enzyme catalyses tRNA(Tyr) + L-tyrosine + ATP = L-tyrosyl-tRNA(Tyr) + AMP + diphosphate + H(+). Catalyzes the attachment of tyrosine to tRNA(Tyr) in a two-step reaction: tyrosine is first activated by ATP to form Tyr-AMP and then transferred to the acceptor end of tRNA(Tyr). This Haemophilus influenzae (strain ATCC 51907 / DSM 11121 / KW20 / Rd) protein is Tyrosine--tRNA ligase.